A 98-amino-acid polypeptide reads, in one-letter code: NADH-ubiquinone oxidoreductase chain 4L (98 aa).

3 helical membrane-spanning segments follow: residues 1–21, 29–49, and 61–81; these read MSITTLNIMVAFTMALLGMFT, SLLCLEGMMLSLFMLATIVSL, and VILLVFAACEAAVGLALLVMV.

Belongs to the complex I subunit 4L family. Core subunit of respiratory chain NADH dehydrogenase (Complex I) which is composed of 45 different subunits.

The protein resides in the mitochondrion inner membrane. The enzyme catalyses a ubiquinone + NADH + 5 H(+)(in) = a ubiquinol + NAD(+) + 4 H(+)(out). In terms of biological role, core subunit of the mitochondrial membrane respiratory chain NADH dehydrogenase (Complex I) which catalyzes electron transfer from NADH through the respiratory chain, using ubiquinone as an electron acceptor. Part of the enzyme membrane arm which is embedded in the lipid bilayer and involved in proton translocation. This chain is NADH-ubiquinone oxidoreductase chain 4L (MT-ND4L), found in Ochotona collaris (Collared pika).